The following is a 213-amino-acid chain: Protein-L-isoaspartate O-methyltransferase (213 aa).

The active site involves serine 64.

Belongs to the methyltransferase superfamily. L-isoaspartyl/D-aspartyl protein methyltransferase family.

It localises to the cytoplasm. The enzyme catalyses [protein]-L-isoaspartate + S-adenosyl-L-methionine = [protein]-L-isoaspartate alpha-methyl ester + S-adenosyl-L-homocysteine. Functionally, catalyzes the methyl esterification of L-isoaspartyl residues in peptides and proteins that result from spontaneous decomposition of normal L-aspartyl and L-asparaginyl residues. It plays a role in the repair and/or degradation of damaged proteins. This is Protein-L-isoaspartate O-methyltransferase from Flavobacterium psychrophilum (strain ATCC 49511 / DSM 21280 / CIP 103535 / JIP02/86).